Reading from the N-terminus, the 376-residue chain is MKFTLHKTNGMARRGTMTFNRPQGEFTVETPAFMPVGTYGTVKGMTPEEVRVTGAEILLGNTFHLWLRPGQEIMRQHGDLHDFMQWHRPILTDSGGFQVFSLGKLRKITEEGVKFQNPINGERIFLSPEKSMEIQYDLGSDIVMIFDECTPYPATFDYAKKSMEMSLRWAKRSRERFDELGNKNALFGIVQGSTFEDLRKLSIEGLINIGFDGYAVGGLAVGEPKEDMHRILAYVCPQLPADKPRYLMGVGKPEDLVEGVRRGIDMFDCVMPTRNARNGHLFVSNGIVKIRNAKYRNDTTSLDPECDCYTCKHYTKAYLYHLDKCGEILGARLNTIHNLHYYQRLMAQIRQAIEEDRFEDFVVEFYKKIGKSVPTR.

Catalysis depends on Asp-93, which acts as the Proton acceptor. Residues 93–97 (DSGGF), Asp-147, Gln-191, and Gly-218 contribute to the substrate site. Residues 249–255 (GVGKPED) are RNA binding. The active-site Nucleophile is the Asp-268. An RNA binding; important for wobble base 34 recognition region spans residues 273 to 277 (TRNAR). Zn(2+) is bound by residues Cys-306, Cys-308, Cys-311, and His-337.

The protein belongs to the queuine tRNA-ribosyltransferase family. In terms of assembly, homodimer. Within each dimer, one monomer is responsible for RNA recognition and catalysis, while the other monomer binds to the replacement base PreQ1. Zn(2+) serves as cofactor.

The enzyme catalyses 7-aminomethyl-7-carbaguanine + guanosine(34) in tRNA = 7-aminomethyl-7-carbaguanosine(34) in tRNA + guanine. It functions in the pathway tRNA modification; tRNA-queuosine biosynthesis. Functionally, catalyzes the base-exchange of a guanine (G) residue with the queuine precursor 7-aminomethyl-7-deazaguanine (PreQ1) at position 34 (anticodon wobble position) in tRNAs with GU(N) anticodons (tRNA-Asp, -Asn, -His and -Tyr). Catalysis occurs through a double-displacement mechanism. The nucleophile active site attacks the C1' of nucleotide 34 to detach the guanine base from the RNA, forming a covalent enzyme-RNA intermediate. The proton acceptor active site deprotonates the incoming PreQ1, allowing a nucleophilic attack on the C1' of the ribose to form the product. After dissociation, two additional enzymatic reactions on the tRNA convert PreQ1 to queuine (Q), resulting in the hypermodified nucleoside queuosine (7-(((4,5-cis-dihydroxy-2-cyclopenten-1-yl)amino)methyl)-7-deazaguanosine). This is Queuine tRNA-ribosyltransferase from Histophilus somni (strain 129Pt) (Haemophilus somnus).